A 130-amino-acid chain; its full sequence is Small ribosomal subunit protein uS9 (130 aa).

Belongs to the universal ribosomal protein uS9 family.

This chain is Small ribosomal subunit protein uS9, found in Salmonella paratyphi C (strain RKS4594).